The primary structure comprises 430 residues: Enolase (430 aa).

The sufficient for secretion stretch occupies residues 1 to 140 (MPYIVDVYAR…YQYLGGFNSK (140 aa)). A Phosphothreonine modification is found at T141. Q163 contacts (2R)-2-phosphoglycerate. Catalysis depends on E205, which acts as the Proton donor. D242 lines the Mg(2+) pocket. At S259 the chain carries Phosphoserine. Y281 is modified (phosphotyrosine). Mg(2+) contacts are provided by E287 and D314. Phosphoserine is present on S325. 4 residues coordinate (2R)-2-phosphoglycerate: K339, R368, S369, and K390. Catalysis depends on K339, which acts as the Proton acceptor.

This sequence belongs to the enolase family. In terms of assembly, homooctamer. Component of the RNA degradosome complex composed of rny, rnjA, rnjB, pnp, pfkA and eno (although rnjA and rnjB's presence is controversial). The cofactor is Mg(2+). In terms of processing, phosphorylated during sporulation.

The protein resides in the cytoplasm. It localises to the secreted. Its subcellular location is the cell surface. The catalysed reaction is (2R)-2-phosphoglycerate = phosphoenolpyruvate + H2O. It functions in the pathway carbohydrate degradation; glycolysis; pyruvate from D-glyceraldehyde 3-phosphate: step 4/5. With respect to regulation, covalent binding to the substrate (probably 2-PG) at Lys-339 of a small fraction of enolase causes inactivation of the enzyme, and possibly serves as a signal for the export of the protein. Citrate acts as a non-competitive inhibitor for both forward and reverse reactions, probably by chelating Mg(2+). Functionally, catalyzes the reversible conversion of 2-phosphoglycerate (2-PG) into phosphoenolpyruvate (PEP). It is essential for the degradation of carbohydrates via glycolysis. A component of the RNA degradosome, a multi-enzyme complex involved in RNA processing and messenger RNA degradation. The sequence is that of Enolase from Bacillus subtilis (strain 168).